A 564-amino-acid polypeptide reads, in one-letter code: Apyrase (564 aa).

The first 25 residues, 1 to 25 (MAGKPGIQLFVIFLLLSSFAAVVWA), serve as a signal peptide directing secretion. Aspartate 48, histidine 50, aspartate 99, asparagine 131, histidine 234, and histidine 258 together coordinate a divalent metal cation. Arginine 371 is a binding site for AMP. The N-linked (GlcNAc...) asparagine glycan is linked to asparagine 391. AMP-binding residues include arginine 406, phenylalanine 425, and aspartate 515.

Belongs to the 5'-nucleotidase family. The cofactor is a divalent metal cation. Female salivary gland (at protein level). Low-level expression in male tissues. Not detected in female carcasses without salivary glands.

It is found in the secreted. It catalyses the reaction a ribonucleoside 5'-triphosphate + 2 H2O = a ribonucleoside 5'-phosphate + 2 phosphate + 2 H(+). Its function is as follows. Facilitates hematophagy by inhibiting ADP-dependent platelet aggregation in the host. Cleaves adenosine triphosphate (ATP) and adenosine diphosphate (ADP) to adenosine monophosphate (AMP) and inorganic phosphate. May reduce probing time by facilitating the speed of locating blood. The sequence is that of Apyrase from Aedes albopictus (Asian tiger mosquito).